A 193-amino-acid polypeptide reads, in one-letter code: Bradykinin-potentiating and C-type natriuretic peptides (193 aa).

The first 23 residues, 1 to 23 (MFVSRLAASGLLLLALLALSLDG), serve as a signal peptide directing secretion. The propeptide occupies 24–27 (KPVH). Residues 25-173 (PVHQSKPGRS…RMKGLAKKAM (149 aa)) form a disordered region. Gln-28 is subject to Pyrrolidone carboxylic acid. Propeptides lie at residues 40-43 (LSAQ) and 58-64 (LSVQQWS). Residue Gln-65 is modified to Pyrrolidone carboxylic acid. Residues 75–169 (VVVQPHESPA…GGARRMKGLA (95 aa)) constitute a propeptide that is removed on maturation. The segment covering 95-123 (SPGPEAASGPAAPHRLPKSKGASATSAAS) has biased composition (low complexity). The span at 125–150 (PMRDLRTDGKQERQKWGRMVQPDHHA) shows a compositional bias: basic and acidic residues. Residues 152-162 (PGGGGGGGGGA) show a composition bias toward gly residues. A compositionally biased stretch (basic residues) spans 163–173 (RRMKGLAKKAM). A disulfide bridge connects residues Cys-177 and Cys-193.

In the N-terminal section; belongs to the bradykinin-potentiating peptide family. It in the C-terminal section; belongs to the natriuretic peptide family. Expressed by the venom gland.

The protein localises to the secreted. Functionally, bradykinin-potentiating peptide both inhibits the activity of the angiotensin-converting enzyme (ACE) and enhances the action of bradykinin by inhibiting the peptidases that inactivate it. It acts as an indirect hypotensive agent. Neither synthetic Tf1, nor synthetic Tf2 show bradykinin-potentiating effects. Its function is as follows. Has a vasorelaxant activity in rat aortic strips and a diuretic potency in anesthetized rats. Has a vasorelaxant activity in rat aortic strips and a diuretic potency in anesthetized rats. Is as potent as Tf-CNP. This Protobothrops flavoviridis (Habu) protein is Bradykinin-potentiating and C-type natriuretic peptides.